The primary structure comprises 210 residues: Imidazoleglycerol-phosphate dehydratase (210 aa).

The protein belongs to the imidazoleglycerol-phosphate dehydratase family.

It localises to the cytoplasm. The catalysed reaction is D-erythro-1-(imidazol-4-yl)glycerol 3-phosphate = 3-(imidazol-4-yl)-2-oxopropyl phosphate + H2O. It participates in amino-acid biosynthesis; L-histidine biosynthesis; L-histidine from 5-phospho-alpha-D-ribose 1-diphosphate: step 6/9. The polypeptide is Imidazoleglycerol-phosphate dehydratase (Mycobacterium marinum (strain ATCC BAA-535 / M)).